The primary structure comprises 167 residues: Ureidoglycolate lyase (167 aa).

Belongs to the ureidoglycolate lyase family. Homodimer. Ni(2+) is required as a cofactor.

The catalysed reaction is (S)-ureidoglycolate = urea + glyoxylate. It functions in the pathway nitrogen metabolism; (S)-allantoin degradation. In terms of biological role, catalyzes the catabolism of the allantoin degradation intermediate (S)-ureidoglycolate, generating urea and glyoxylate. Involved in the utilization of allantoin as nitrogen source. This Pseudomonas putida (strain ATCC 700007 / DSM 6899 / JCM 31910 / BCRC 17059 / LMG 24140 / F1) protein is Ureidoglycolate lyase.